The following is a 42-amino-acid chain: uncharacterized protein (42 aa).

It is found in the plastid. It localises to the chloroplast. This is an uncharacterized protein from Diacronema lutheri (Unicellular marine alga).